The following is a 224-amino-acid chain: UPF0758 protein PM1152 (224 aa).

Residues A102 to L224 form the MPN domain. Zn(2+)-binding residues include H173, H175, and D186. The short motif at H173–D186 is the JAMM motif element.

It belongs to the UPF0758 family.

The polypeptide is UPF0758 protein PM1152 (Pasteurella multocida (strain Pm70)).